The chain runs to 427 residues: Serine hydroxymethyltransferase (427 aa).

(6S)-5,6,7,8-tetrahydrofolate is bound by residues Leu-127 and 131-133 (GHL). Residue Lys-236 is modified to N6-(pyridoxal phosphate)lysine.

The protein belongs to the SHMT family. As to quaternary structure, homodimer. Pyridoxal 5'-phosphate serves as cofactor.

It localises to the cytoplasm. The catalysed reaction is (6R)-5,10-methylene-5,6,7,8-tetrahydrofolate + glycine + H2O = (6S)-5,6,7,8-tetrahydrofolate + L-serine. It functions in the pathway one-carbon metabolism; tetrahydrofolate interconversion. Its pathway is amino-acid biosynthesis; glycine biosynthesis; glycine from L-serine: step 1/1. In terms of biological role, catalyzes the reversible interconversion of serine and glycine with tetrahydrofolate (THF) serving as the one-carbon carrier. This reaction serves as the major source of one-carbon groups required for the biosynthesis of purines, thymidylate, methionine, and other important biomolecules. Also exhibits THF-independent aldolase activity toward beta-hydroxyamino acids, producing glycine and aldehydes, via a retro-aldol mechanism. The polypeptide is Serine hydroxymethyltransferase (Paramagnetospirillum magneticum (strain ATCC 700264 / AMB-1) (Magnetospirillum magneticum)).